The primary structure comprises 137 residues: Small ribosomal subunit protein uS13 (137 aa).

The disordered stretch occupies residues 114–137 (VTQKNARTRKGPRKTIMAKKDKGK). Over residues 119–130 (ARTRKGPRKTIM) the composition is skewed to basic residues.

This sequence belongs to the universal ribosomal protein uS13 family. As to quaternary structure, part of the 30S ribosomal subunit. Forms a loose heterodimer with protein S19. Forms two bridges to the 50S subunit in the 70S ribosome.

Functionally, located at the top of the head of the 30S subunit, it contacts several helices of the 16S rRNA. In the 70S ribosome it contacts the 23S rRNA (bridge B1a) and protein L5 of the 50S subunit (bridge B1b), connecting the 2 subunits; these bridges are implicated in subunit movement. Contacts the tRNAs in the A and P-sites. This Mesomycoplasma hyopneumoniae (strain 232) (Mycoplasma hyopneumoniae) protein is Small ribosomal subunit protein uS13.